The following is a 381-amino-acid chain: Queuine tRNA-ribosyltransferase (381 aa).

Aspartate 96 functions as the Proton acceptor in the catalytic mechanism. Residues 96–100, aspartate 150, glutamine 193, and glycine 220 contribute to the substrate site; that span reads DSGGF. Residues 251–257 are RNA binding; it reads GVGSPDS. Aspartate 270 serves as the catalytic Nucleophile. The RNA binding; important for wobble base 34 recognition stretch occupies residues 275 to 279; that stretch reads TRIAR. 4 residues coordinate Zn(2+): cysteine 308, cysteine 310, cysteine 313, and histidine 339.

Belongs to the queuine tRNA-ribosyltransferase family. Homodimer. Within each dimer, one monomer is responsible for RNA recognition and catalysis, while the other monomer binds to the replacement base PreQ1. Zn(2+) is required as a cofactor.

The catalysed reaction is 7-aminomethyl-7-carbaguanine + guanosine(34) in tRNA = 7-aminomethyl-7-carbaguanosine(34) in tRNA + guanine. The protein operates within tRNA modification; tRNA-queuosine biosynthesis. Functionally, catalyzes the base-exchange of a guanine (G) residue with the queuine precursor 7-aminomethyl-7-deazaguanine (PreQ1) at position 34 (anticodon wobble position) in tRNAs with GU(N) anticodons (tRNA-Asp, -Asn, -His and -Tyr). Catalysis occurs through a double-displacement mechanism. The nucleophile active site attacks the C1' of nucleotide 34 to detach the guanine base from the RNA, forming a covalent enzyme-RNA intermediate. The proton acceptor active site deprotonates the incoming PreQ1, allowing a nucleophilic attack on the C1' of the ribose to form the product. After dissociation, two additional enzymatic reactions on the tRNA convert PreQ1 to queuine (Q), resulting in the hypermodified nucleoside queuosine (7-(((4,5-cis-dihydroxy-2-cyclopenten-1-yl)amino)methyl)-7-deazaguanosine). This is Queuine tRNA-ribosyltransferase from Bacillus pumilus (strain SAFR-032).